Consider the following 260-residue polypeptide: Thiazole synthase (260 aa).

K96 acts as the Schiff-base intermediate with DXP in catalysis. Residues G157, 184–185 (AG), and 206–207 (NT) contribute to the 1-deoxy-D-xylulose 5-phosphate site.

The protein belongs to the ThiG family. Homotetramer. Forms heterodimers with either ThiH or ThiS.

The protein resides in the cytoplasm. It carries out the reaction [ThiS sulfur-carrier protein]-C-terminal-Gly-aminoethanethioate + 2-iminoacetate + 1-deoxy-D-xylulose 5-phosphate = [ThiS sulfur-carrier protein]-C-terminal Gly-Gly + 2-[(2R,5Z)-2-carboxy-4-methylthiazol-5(2H)-ylidene]ethyl phosphate + 2 H2O + H(+). Its pathway is cofactor biosynthesis; thiamine diphosphate biosynthesis. Its function is as follows. Catalyzes the rearrangement of 1-deoxy-D-xylulose 5-phosphate (DXP) to produce the thiazole phosphate moiety of thiamine. Sulfur is provided by the thiocarboxylate moiety of the carrier protein ThiS. In vitro, sulfur can be provided by H(2)S. The chain is Thiazole synthase from Nitrobacter hamburgensis (strain DSM 10229 / NCIMB 13809 / X14).